The sequence spans 715 residues: Forkhead box protein P2 (715 aa).

Residues 1–28 (MMQESATETISNSSMNQNGMSTLSSQLD) are compositionally biased toward polar residues. Disordered regions lie at residues 1–46 (MMQE…EVST) and 281–339 (DNGI…TGAS). The segment covering 292–305 (TTNNSSSTTSSNTS) has biased composition (low complexity). Residues 326–337 (ARRDSSSHEETG) show a composition bias toward basic and acidic residues. The segment at 346–371 (GVCKWPGCESICEDFGQFLKHLNNEH) adopts a C2H2-type zinc-finger fold. The tract at residues 388–409 (VQQLEIQLSKERERLQAMMTHL) is leucine-zipper. Positions 422-426 (PLNLV) are CTBP1-binding. Residues 438-459 (TSPQSLPQTPTTPTAPVTPITQ) are compositionally biased toward low complexity. The interval 438 to 465 (TSPQSLPQTPTTPTAPVTPITQGPSVIT) is disordered. Residues 504–594 (RPPFTYATLI…SQKITGSPTL (91 aa)) constitute a DNA-binding region (fork-head). Disordered stretches follow at residues 649–668 (LDHI…QPHI) and 678–715 (VIAE…EDLE). Over residues 699–715 (LEDDREIEEEPLSEDLE) the composition is skewed to acidic residues.

As to quaternary structure, forms homodimers and heterodimers with FOXP1 and FOXP4. Dimerization is required for DNA-binding. Interacts with CTBP1. Interacts with FOXP1. Isoform 1 and isoform 3 interact with TBR1. Interacts with ZMYM2. In terms of tissue distribution, isoform 1 and isoform 6 are expressed in adult and fetal brain, caudate nucleus and lung.

It is found in the nucleus. In terms of biological role, transcriptional repressor that may play a role in the specification and differentiation of lung epithelium. May also play a role in developing neural, gastrointestinal and cardiovascular tissues. Can act with CTBP1 to synergistically repress transcription but CTPBP1 is not essential. Plays a role in synapse formation by regulating SRPX2 levels. Involved in neural mechanisms mediating the development of speech and language. This is Forkhead box protein P2 (FOXP2) from Homo sapiens (Human).